The following is a 535-amino-acid chain: MSLVKKFATVGGATLGSRLFGFIRETFMAAALGTGPVADAFNTAFRLPNTFRRLFAEGAFNSAFVPLFAKEIEAHGMDGARRFSEEVFGVLFTVLLLLTIAMELSMPFIVGQLIAPGFADDPAKFTSTVTFATIMFPYLACMSLAAMMAGMLNSLHRYFAAAIAPVFLNFILIAVLAYAWYSGQDAVAVGYDLSWGVLAAGLVQLAIVWVAVRNAGIRIGFRRPRLTPNVKRLLVLALPAAITGGITQINLLINTNIASAKEGAVSSLVYADRIYQLPLGVVGIAVATVLLPELARALRGGNLNEAANLQNRSVEFTLFLTLPAAAALLVMSEPIVRLLFERGQFSPESTVVVGHILAIYGLGLPAFVLIKAFIPGFFAREDTRTPMIFAGISVAVNVSLALTLFPSLAASGIATAEIVAGWVNALLLFATLVWRGHWGRDIPLLTRIPRLVIAAAIMAAALYVAVDWLAFPLSSAAPLSTRALTLCGLIAAAMAIYFAVAFGIGGASLSMIRRSVKRGASASSVERASEGADRQ.

Transmembrane regions (helical) follow at residues V90–V110, F131–M151, F159–A179, D192–V212, L233–I253, I274–L294, F316–V336, T350–I370, I388–L408, I413–V433, L451–F471, and L484–I504.

This sequence belongs to the MurJ/MviN family.

The protein localises to the cell inner membrane. Its pathway is cell wall biogenesis; peptidoglycan biosynthesis. In terms of biological role, involved in peptidoglycan biosynthesis. Transports lipid-linked peptidoglycan precursors from the inner to the outer leaflet of the cytoplasmic membrane. This chain is Probable lipid II flippase MurJ, found in Rhizobium meliloti (strain 1021) (Ensifer meliloti).